A 359-amino-acid chain; its full sequence is MRKIVHVDMDAFYASVEQRDDPSLRGKPVVVAWRGARSVVCAASYEARIFGIRSAMPAVRAERLCPDAIFVPPDFTRYKAVSRQVREIFHRHTDLVEPLSLDEAYLDVTHAKTGMQLATEVAQLIRTQIREETQLTASAGIAPNKFLAKIASDWRKPDGQFVIAPSRVDAFLLPLKVNRIPGVGKVMDGKLAALGIVTVADLRQRPLEELQAHFGSFGQSLYRRARGIDERPVEPDQEVQSVSSEDTFSEDLALDALAPHILRLAEKTWLATRRTERIGRTVVLKLKTSNFRILTRSYTPEQPPTSQEALAQIALALTRRVELPAQTRYRLVGVGLGGFSDVENGAVQGQLFGQMPPLE.

The 181-residue stretch at 4-184 folds into the UmuC domain; the sequence is IVHVDMDAFY…LKVNRIPGVG (181 aa). Mg(2+)-binding residues include D8 and D102. E103 is an active-site residue.

It belongs to the DNA polymerase type-Y family. In terms of assembly, monomer. Mg(2+) is required as a cofactor.

Its subcellular location is the cytoplasm. It carries out the reaction DNA(n) + a 2'-deoxyribonucleoside 5'-triphosphate = DNA(n+1) + diphosphate. Functionally, poorly processive, error-prone DNA polymerase involved in untargeted mutagenesis. Copies undamaged DNA at stalled replication forks, which arise in vivo from mismatched or misaligned primer ends. These misaligned primers can be extended by PolIV. Exhibits no 3'-5' exonuclease (proofreading) activity. May be involved in translesional synthesis, in conjunction with the beta clamp from PolIII. This chain is DNA polymerase IV, found in Xanthomonas axonopodis pv. citri (strain 306).